The following is a 602-amino-acid chain: FAD-binding monooxygenase hmp7 (602 aa).

Residues Thr-108–Trp-111, Asp-120–Val-121, and Tyr-126 each bind FAD. Position 118–120 (Gln-118–Asp-120) interacts with NADP(+). NADP(+)-binding positions include Thr-252–Gln-258 and Arg-275–Thr-276.

The protein belongs to the FAD-binding monooxygenase family. The cofactor is FAD.

It functions in the pathway secondary metabolite biosynthesis. Functionally, FAD-binding monooxygenase; part of the gene cluster that mediates the biosynthesis of hypothemycin, a resorcylic acid lactone (RAL) that irreversibly inhibits a subset of protein kinases with a conserved cysteine in the ATP binding site such as human ERK2. The first step is performed by both PKSs hmp3 and hmp8 and leads to the production of 7',8'-dehydrozearalenol (DHZ). The highly reducing PKS hpm8 synthesizes the reduced hexaketide (7S,11S,2E,8E)-7,11-dihydroxy-dodeca-2,8-dienoate, which is transferred downstream to the non-reducing PKS hpm3. Hpm3 then extends the reduced hexaketide to a nonaketide, after which regioselective cyclization and macrolactonization affords DHZ. The next step is the conversion of DHZ into aigialomycin C and is performed by the O-methyltransferase hmp5, the FAD-binding monooxygenase hmp7, and the cytochrome P450 monooxygenase hmp1. The wide substrate tolerance of the hmp5 and hmp7 implies that the reactions from DHZ to aigialomycin C can occur in any order. The steps from aigialomycin C to hypothemycin are less well established. The FAD-linked oxidoreductase hmp9 presumably catalyzes oxidation of the C-6' hydroxyl to a ketone. The timing of this oxidation is important, since the resulting enone functional group is a Michael acceptor that can react spontaneously with glutathione, an abundant metabolite in fungal cells. The glutathione S-transferase hmp2 catalyzes cis-trans isomerization of the 7',8' double bond with equilibrium favoring the trans isomer. The hpm6-encoded transporter might preferentially pump hypothemycin out of the cell relative to the trans isomer aigialomycin A. The cis-to-trans isomerization may be coupled with C-4' hydroxylation, since all known hypothemycin analogs containing the enone functional group also have hydroxyl groups at both C-4' and C-5'. The sequence is that of FAD-binding monooxygenase hmp7 from Hypomyces subiculosus (Nectria subiculosa).